Here is a 226-residue protein sequence, read N- to C-terminus: MNPIVINRLQRKLGYTFNHQELLQQALTHRSASSKHNERLEFLGDSILSFVIANALYHRFPRVDEGDMSRMRATLVRGNTLAELAREFDLGECLRLGPGELKSGGFRRESILADTMEALIGGVFLDSNIQTVEQLILNWYKTRLDEISPGDKQKDPKTRLQEYLQGRHLPLPSYLVVQVRGEAHDQEFTIHCQVSGLSEPVVGTGSSRRKAEQAAAEQVLKKLELE.

The RNase III domain maps to 6–128; that stretch reads INRLQRKLGY…LIGGVFLDSN (123 aa). Glu41 contributes to the Mg(2+) binding site. Residue Asp45 is part of the active site. Asp114 and Glu117 together coordinate Mg(2+). Glu117 is an active-site residue. The region spanning 155 to 225 is the DRBM domain; it reads DPKTRLQEYL…AEQVLKKLEL (71 aa).

Belongs to the ribonuclease III family. As to quaternary structure, homodimer. Mg(2+) serves as cofactor.

The protein resides in the cytoplasm. It catalyses the reaction Endonucleolytic cleavage to 5'-phosphomonoester.. In terms of biological role, digests double-stranded RNA. Involved in the processing of primary rRNA transcript to yield the immediate precursors to the large and small rRNAs (23S and 16S). Processes some mRNAs, and tRNAs when they are encoded in the rRNA operon. Processes pre-crRNA and tracrRNA of type II CRISPR loci if present in the organism. This is Ribonuclease 3 from Salmonella choleraesuis (strain SC-B67).